The following is a 218-amino-acid chain: Protein-methionine-sulfoxide reductase heme-binding subunit MsrQ (218 aa).

Helical transmembrane passes span 8-28, 60-80, 86-106, 121-141, and 155-175; these read VIVA…LLGW, FLLI…AVLI, LGLY…TLDL, PYIT…ITST, and VHML…WLVK.

This sequence belongs to the MsrQ family. Heterodimer of a catalytic subunit (MsrP) and a heme-binding subunit (MsrQ). FMN is required as a cofactor. The cofactor is heme b.

The protein localises to the cell inner membrane. Part of the MsrPQ system that repairs oxidized periplasmic proteins containing methionine sulfoxide residues (Met-O), using respiratory chain electrons. Thus protects these proteins from oxidative-stress damage caused by reactive species of oxygen and chlorine generated by the host defense mechanisms. MsrPQ is essential for the maintenance of envelope integrity under bleach stress, rescuing a wide series of structurally unrelated periplasmic proteins from methionine oxidation. MsrQ provides electrons for reduction to the reductase catalytic subunit MsrP, using the quinone pool of the respiratory chain. This Xanthomonas oryzae pv. oryzae (strain MAFF 311018) protein is Protein-methionine-sulfoxide reductase heme-binding subunit MsrQ.